A 351-amino-acid polypeptide reads, in one-letter code: V-type proton ATPase subunit d2 (351 aa).

The protein belongs to the V-ATPase V0D/AC39 subunit family. As to quaternary structure, V-ATPase is a heteromultimeric enzyme composed of a peripheral catalytic V1 complex (components A to H) attached to an integral membrane V0 proton pore complex (components: a, c, c'', d and e).

The protein resides in the vacuole membrane. In terms of biological role, subunit of the integral membrane V0 complex of vacuolar ATPase. Vacuolar ATPase is responsible for acidifying a variety of intracellular compartments in eukaryotic cells, thus providing most of the energy required for transport processes in the vacuolar system. The sequence is that of V-type proton ATPase subunit d2 (VHA-d2) from Arabidopsis thaliana (Mouse-ear cress).